Here is a 1472-residue protein sequence, read N- to C-terminus: ABC transporter FGM5 (1472 aa).

11 consecutive transmembrane segments (helical) span residues 32 to 52 (IILG…RVAT), 67 to 87 (FTKL…LILS), 100 to 120 (FAVA…ALSF), 163 to 183 (YAGV…LELQ), 197 to 217 (SPEE…IGIF), 271 to 291 (ALIV…GFQY), 316 to 336 (GLIG…ALFW), 386 to 406 (FHGL…CFLL), 412 to 432 (LAFI…TAIA), 493 to 513 (LLIM…VVAF), and 534 to 554 (LLTN…AAFV). The 268-residue stretch at 284–551 (IAMIGFQYAQ…MFQSVPAVIA (268 aa)) folds into the ABC transmembrane type-1 1 domain. Residues 605–834 (ISIVDGSFGW…GIYIPTLGLS (230 aa)) form the ABC transporter 1 domain. ATP is bound at residue 638 to 645 (GPVASGKS). N-linked (GlcNAc...) asparagine glycans are attached at residues Asn-682, Asn-696, Asn-763, Asn-784, and Asn-843. 4 consecutive transmembrane segments (helical) span residues 900-920 (LLSG…MGWW), 938-958 (LFRG…VIFM), 1003-1023 (GELP…FAMA), and 1024-1044 (VVVA…FSII). The region spanning 900-1139 (LLSGIMYAVG…VGVVAISTQL (240 aa)) is the ABC transmembrane type-1 2 domain. Asn-1101 carries an N-linked (GlcNAc...) asparagine glycan. Residues 1116-1136 (FLATFLNLIVMVLAVGVVAIS) form a helical membrane-spanning segment. One can recognise an ABC transporter 2 domain in the interval 1218–1468 (YKNDDESPAS…EGSWFSQLWA (251 aa)). Residue 1255-1262 (GRTGSGKS) participates in ATP binding. 2 N-linked (GlcNAc...) asparagine glycosylation sites follow: Asn-1277 and Asn-1293.

It belongs to the ABC transporter superfamily. ABCC family. Conjugate transporter (TC 3.A.1.208) subfamily.

The protein localises to the cell membrane. Its pathway is secondary metabolite biosynthesis. ABC transporter; part of the Fg3_54/C64 gene cluster that mediates the biosynthesis of the octapeptide fusaoctaxin A, a virulence factor that is required for cell-to-cell invasiveness of plant host. The 2 nonribosomal peptide synthetases NRPS9 and NRPS5 form an assembly line which likely utilizes GABA as a starter unit (loaded on the unique module M1 of NRPS9) and sequentially incorporates seven extender units composed of the residues L-Ala, L-allo-Ile, L-Ser, L-Val, L-Ser, L-Leu and L-Leu, respectively. During the process, each of the residues that are tethered on modules M3-M7 of NRPS5 containing an E domain can undergo an epimerization reaction to produce a D-configuration before the transpeptidation reaction occurs. The elongation of the peptidyl chain might be terminated by module M8-mediated L-Leu incorporation, followed by R domain-catalyzed 4 electron reduction to release the resulting octapeptide from the assembly line as an alcohol. Fusaoctaxin A is cleaved by the cluster specific ABC transporter FGM5 to the pentapeptide fusapentaxin A and the tripeptide fusatrixin A. The other enzymes from the cluster, FGM1, FGM2, FGM3 and FGM9 seem not to be involved in the biosynthesis of fusaoctaxin A and their functions have still to be determined. The chain is ABC transporter FGM5 from Gibberella zeae (strain ATCC MYA-4620 / CBS 123657 / FGSC 9075 / NRRL 31084 / PH-1) (Wheat head blight fungus).